We begin with the raw amino-acid sequence, 141 residues long: Large ribosomal subunit protein uL22 (141 aa).

The protein belongs to the universal ribosomal protein uL22 family. Part of the 50S ribosomal subunit.

Its function is as follows. This protein binds specifically to 23S rRNA; its binding is stimulated by other ribosomal proteins, e.g. L4, L17, and L20. It is important during the early stages of 50S assembly. It makes multiple contacts with different domains of the 23S rRNA in the assembled 50S subunit and ribosome. Functionally, the globular domain of the protein is located near the polypeptide exit tunnel on the outside of the subunit, while an extended beta-hairpin is found that lines the wall of the exit tunnel in the center of the 70S ribosome. The sequence is that of Large ribosomal subunit protein uL22 from Frankia casuarinae (strain DSM 45818 / CECT 9043 / HFP020203 / CcI3).